The primary structure comprises 1846 residues: C2 domain-containing protein (1846 aa).

The interval 16–36 (NTEKEEGKNAEINENNDPNTQ) is disordered. Positions 17–26 (TEKEEGKNAE) are enriched in basic and acidic residues. The span at 27–36 (INENNDPNTQ) shows a compositional bias: polar residues. In terms of domain architecture, C2 spans 497–623 (VPRYRQRGDI…FNEKNVRRNK (127 aa)). Composition is skewed to basic and acidic residues over residues 1193–1211 (DEHTDIDTEKKKHEKDNYK) and 1230–1243 (KDDHHHITDKKVSK). Disordered regions lie at residues 1193–1244 (DEHT…VSKS), 1346–1370 (KYTINEKRDDIKTKKKRSKEKKKQD), 1456–1635 (KNER…KKRV), 1652–1692 (NEKM…NNER), and 1827–1846 (EEPSSKKSPQKKKIVIVRKN). Residues 1349-1506 (INEKRDDIKT…DENMKEEQKM (158 aa)) are a coiled coil. Basic and acidic residues-rich tracts occupy residues 1456–1474 (KNERNKMEKSYKRMIQKDK), 1481–1629 (ESRD…MRRE), 1652–1663 (NEKMKKKEEKEE), and 1670–1692 (KEDIEDKYKIGKEASLDENNNER). A compositionally biased stretch (basic residues) spans 1834–1846 (SPQKKKIVIVRKN).

It localises to the membrane. Its function is as follows. Binds calcium and phospholipids. Regulates microneme secretion. This Plasmodium falciparum (isolate 3D7) protein is C2 domain-containing protein.